The chain runs to 24 residues: Lactadherin (24 aa).

It is found in the membrane. The protein localises to the secreted. The protein resides in the cytoplasmic vesicle. It localises to the secretory vesicle. Its subcellular location is the acrosome membrane. Its function is as follows. Specific ligand for the alpha-v/beta-3 and alpha-v/beta-5 receptors. Also binds to phosphatidylserine-enriched cell surfaces in a receptor-independent manner. Zona pellucida-binding protein which may play a role in gamete interaction. Contributes to phagocytic removal of apoptotic cells in many tissues. Plays an important role in the maintenance of intestinal epithelial homeostasis and the promotion of mucosal healing. Promotes VEGF-dependent neovascularization. The chain is Lactadherin from Equus asinus (Donkey).